The primary structure comprises 148 residues: Large ribosomal subunit protein bL9 (148 aa).

This sequence belongs to the bacterial ribosomal protein bL9 family.

Its function is as follows. Binds to the 23S rRNA. The protein is Large ribosomal subunit protein bL9 of Coprothermobacter proteolyticus (strain ATCC 35245 / DSM 5265 / OCM 4 / BT).